A 744-amino-acid polypeptide reads, in one-letter code: Polyribonucleotide nucleotidyltransferase (744 aa).

Mg(2+) is bound by residues Asp487 and Asp493. Positions 554-613 constitute a KH domain; that stretch reads PSTTTLKVDKDKIRDIIGPGGKVIKEICETSGAKIDISDDGTVSIYASDKDKLKVALDKV. One can recognise an S1 motif domain in the interval 623–691; that stretch reads GEVFNGTVMK…NKGKAKLTIK (69 aa). The disordered stretch occupies residues 691–744; that stretch reads KNAEKDKSSANPKPKNSPKEHQEPEKRDNGKKRAWNEDNNAETTEVVTERKYFS. The span at 707–718 shows a compositional bias: basic and acidic residues; sequence SPKEHQEPEKRD. Residues 727–736 are compositionally biased toward polar residues; sequence EDNNAETTEV.

Belongs to the polyribonucleotide nucleotidyltransferase family. Mg(2+) serves as cofactor.

Its subcellular location is the cytoplasm. It carries out the reaction RNA(n+1) + phosphate = RNA(n) + a ribonucleoside 5'-diphosphate. Its function is as follows. Involved in mRNA degradation. Catalyzes the phosphorolysis of single-stranded polyribonucleotides processively in the 3'- to 5'-direction. This is Polyribonucleotide nucleotidyltransferase from Rickettsia bellii (strain OSU 85-389).